The following is a 544-amino-acid chain: T-complex protein 1 subunit gamma (544 aa).

Cys-368 and Cys-374 are oxidised to a cystine. Residues 525-544 form a disordered region; the sequence is SKKRGGNEPTNPAAMAQGQE.

It belongs to the TCP-1 chaperonin family. Heterooligomeric complex of about 850 to 900 kDa that forms two stacked rings, 12 to 16 nm in diameter.

It is found in the cytoplasm. Its function is as follows. Molecular chaperone; assists the folding of proteins upon ATP hydrolysis. Known to play a role, in vitro, in the folding of actin and tubulin. In Drosophila melanogaster (Fruit fly), this protein is T-complex protein 1 subunit gamma.